We begin with the raw amino-acid sequence, 333 residues long: Fructose-1,6-bisphosphatase class 1 (333 aa).

Glu92, Asp113, Leu115, and Asp116 together coordinate Mg(2+). Residues 116-119, Asn209, Tyr242, and Lys272 each bind substrate; that span reads DGSS. Glu278 provides a ligand contact to Mg(2+).

The protein belongs to the FBPase class 1 family. Homotetramer. Requires Mg(2+) as cofactor.

The protein localises to the cytoplasm. It catalyses the reaction beta-D-fructose 1,6-bisphosphate + H2O = beta-D-fructose 6-phosphate + phosphate. It functions in the pathway carbohydrate biosynthesis; Calvin cycle. In Chlorobium phaeovibrioides (strain DSM 265 / 1930) (Prosthecochloris vibrioformis (strain DSM 265)), this protein is Fructose-1,6-bisphosphatase class 1.